The chain runs to 186 residues: MSDVIDLSDAERRMKGALEAVRHQFATIRTGRANPALLDRIEVEAYGTRMPIKSVASIGAPEPRLLTITPYDPNLLKTIERAIRDSDLGLNPQNDGKIIRLPIPELTEERRRELIRLVRHMAEEGRVSVRNVRRDEMHDIQRLRREGEISEDDERRAEAELQKLTDAYIKRIDEALAEKEAELMEV.

It belongs to the RRF family.

It is found in the cytoplasm. Responsible for the release of ribosomes from messenger RNA at the termination of protein biosynthesis. May increase the efficiency of translation by recycling ribosomes from one round of translation to another. In Rubrobacter xylanophilus (strain DSM 9941 / JCM 11954 / NBRC 16129 / PRD-1), this protein is Ribosome-recycling factor.